The primary structure comprises 300 residues: Acetylglutamate kinase (300 aa).

Residues Gly67 to Gly68, Arg89, and Asn194 each bind substrate.

The protein belongs to the acetylglutamate kinase family. ArgB subfamily.

It localises to the cytoplasm. It carries out the reaction N-acetyl-L-glutamate + ATP = N-acetyl-L-glutamyl 5-phosphate + ADP. It functions in the pathway amino-acid biosynthesis; L-arginine biosynthesis; N(2)-acetyl-L-ornithine from L-glutamate: step 2/4. Catalyzes the ATP-dependent phosphorylation of N-acetyl-L-glutamate. The sequence is that of Acetylglutamate kinase from Saccharophagus degradans (strain 2-40 / ATCC 43961 / DSM 17024).